Here is a 378-residue protein sequence, read N- to C-terminus: Protein RecA (378 aa).

79–86 lines the ATP pocket; the sequence is GPESSGKT.

This sequence belongs to the RecA family.

It is found in the cytoplasm. In terms of biological role, can catalyze the hydrolysis of ATP in the presence of single-stranded DNA, the ATP-dependent uptake of single-stranded DNA by duplex DNA, and the ATP-dependent hybridization of homologous single-stranded DNAs. It interacts with LexA causing its activation and leading to its autocatalytic cleavage. This is Protein RecA from Streptococcus equi subsp. zooepidemicus (strain MGCS10565).